Reading from the N-terminus, the 84-residue chain is Small ribosomal subunit protein bS18A (84 aa).

Belongs to the bacterial ribosomal protein bS18 family. Part of the 30S ribosomal subunit. Forms a tight heterodimer with protein bS6.

Functionally, binds as a heterodimer with protein bS6 to the central domain of the 16S rRNA, where it helps stabilize the platform of the 30S subunit. This chain is Small ribosomal subunit protein bS18A, found in Frankia alni (strain DSM 45986 / CECT 9034 / ACN14a).